The following is a 103-amino-acid chain: BLOC-1-related complex subunit 7 (103 aa).

Belongs to the BORCS7 family.

It localises to the lysosome membrane. In terms of biological role, as part of a BORC-like complex may play a role in lysosomes movement and localization at the cell periphery. Associated with the cytosolic face of lysosomes, this complex may couple lysosomes to microtubule plus-end-directed kinesin motor. This Danio rerio (Zebrafish) protein is BLOC-1-related complex subunit 7.